We begin with the raw amino-acid sequence, 62 residues long: Large ribosomal subunit protein bL28 (62 aa).

This sequence belongs to the bacterial ribosomal protein bL28 family.

This is Large ribosomal subunit protein bL28 from Helicobacter pylori (strain HPAG1).